Reading from the N-terminus, the 213-residue chain is Probable transaldolase (213 aa).

K83 (schiff-base intermediate with substrate) is an active-site residue.

Belongs to the transaldolase family. Type 3B subfamily.

Its subcellular location is the cytoplasm. It catalyses the reaction D-sedoheptulose 7-phosphate + D-glyceraldehyde 3-phosphate = D-erythrose 4-phosphate + beta-D-fructose 6-phosphate. It participates in carbohydrate degradation; pentose phosphate pathway; D-glyceraldehyde 3-phosphate and beta-D-fructose 6-phosphate from D-ribose 5-phosphate and D-xylulose 5-phosphate (non-oxidative stage): step 2/3. In terms of biological role, transaldolase is important for the balance of metabolites in the pentose-phosphate pathway. The chain is Probable transaldolase from Geobacillus thermodenitrificans (strain NG80-2).